Consider the following 1034-residue polypeptide: Ubiquitin-like-specific protease 2 (1034 aa).

Disordered regions lie at residues 1-42 (MSAR…FRKD), 71-110 (IELS…HSSL), 388-419 (SHAV…DDAT), 731-800 (IDQS…PIRH), 841-960 (GVSS…DSLG), and 983-1034 (SSPT…DEDP). Low complexity predominate over residues 19–33 (SSRASSPRSSASLPP). Over residues 74-85 (SDNDVDNNDEGE) the composition is skewed to acidic residues. The span at 743-756 (TSEPPCSRSSSIST) shows a compositional bias: low complexity. S788 is modified (phosphoserine). Composition is skewed to polar residues over residues 845–856 (PIKNDQALSSTH), 876–904 (QLSS…VISD), and 912–923 (GVNSESKNTSGI). Position 903 is a phosphoserine (S903). 2 positions are modified to phosphoserine: S983 and S984. Positions 992-1017 (TSATSKGSNAQLLSNYGDENNQSQDS) are enriched in polar residues.

This sequence belongs to the peptidase C48 family.

In terms of biological role, insertion mutation in SMT4 confers temperature and benomyl sensitivity; high copy suppressor of a temperature sensitive mutation in MIF2. This is Ubiquitin-like-specific protease 2 (ULP2) from Saccharomyces cerevisiae (strain ATCC 204508 / S288c) (Baker's yeast).